The sequence spans 616 residues: Nucleoprotein (616 aa).

2 short sequence motifs (nuclear localization signal) span residues 230-233 (RPKR) and 473-476 (KPKK).

As to quaternary structure, homomultimerizes to form the nucleocapsid. Binds to viral genomic RNA. Protein-RNA contacts are mediated by a combination of electrostatic interactions between positively charged residues and the phosphate backbone and planar interactions between aromatic side chains and bases.

It localises to the virion. It is found in the host nucleus. The protein localises to the host nucleolus. Its function is as follows. Encapsidates the negative strand viral RNA, protecting it from nucleases. The encapsidated genomic RNA is termed the ribonucleoprotein (RNP) and serves as template for transcription and replication. The chain is Nucleoprotein from Gadus morhua (Atlantic cod).